A 445-amino-acid chain; its full sequence is Clusterin (445 aa).

A signal peptide spans 1–22; it reads MMKTLLLLVGLLLTWDNGRVLG. The Nuclear localization signal motif lies at 78 to 81; the sequence is KKKK. N-linked (GlcNAc...) asparagine glycosylation is found at Asn-86 and Asn-103. 5 disulfides stabilise this stretch: Cys-102–Cys-309, Cys-113–Cys-301, Cys-116–Cys-298, Cys-121–Cys-291, and Cys-129–Cys-281. Ser-133 is subject to Phosphoserine. Asn-145, Asn-277, Asn-287, Asn-350, and Asn-370 each carry an N-linked (GlcNAc...) asparagine glycan. Residue Ser-392 is modified to Phosphoserine. A Nuclear localization signal motif is present at residues 439–443; the sequence is RQKHR.

Belongs to the clusterin family. Antiparallel disulfide-linked heterodimer of an alpha chain and a beta chain. Self-associates and forms higher oligomers. Interacts with a broad range of misfolded proteins, including APP, APOC2 and LYZ. Slightly acidic pH promotes interaction with misfolded proteins. Forms high-molecular weight oligomers upon interaction with misfolded proteins. Interacts with APOA1, LRP2, CLUAP1 and PON1. Interacts with the complement membrane attack complex. Interacts (via alpha chain) with XRCC6. Interacts with SYVN1, COMMD1, BTRC, CUL1 and with ubiquitin and SCF (SKP1-CUL1-F-box protein) E3 ubiquitin-protein ligase complexes. Interacts (via alpha chain) with BAX in stressed cells, where BAX undergoes a conformation change leading to association with the mitochondrial membrane. Does not interact with BAX in unstressed cells. Found in a complex with LTF, CLU, EPPIN and SEMG1. Interacts (immaturely glycosylated pre-secreted form) with HSPA5; this interaction promotes CLU stability and facilitates stress-induced CLU retrotranslocation from the secretory pathway to the mitochondria, thereby reducing stress-induced apoptosis by stabilizing mitochondrial membrane integrity. Interacts with BCL2L1; this interaction releases and activates BAX and promotes cell death. Interacts with TGFBR2 and ACVR1. Interacts (secreted form) with STMN3; this interaction may act as an important modulator during neuronal differentiation. Interacts with VLDLR and LRP8. Proteolytically cleaved on its way through the secretory system, probably within the Golgi lumen. Proteolytic cleavage is not necessary for its chaperone activity. All non-secreted forms are not proteolytically cleaved. Chaperone activity of uncleaved forms is dependent on a non-reducing environment. This proteolytic maturation is disulfide bond formation dependent. Post-translationally, polyubiquitinated, leading to proteasomal degradation. Under cellular stress, the intracellular level of cleaved form is reduced due to proteasomal degradation. In terms of processing, heavily N-glycosylated. About 30% of the protein mass is comprised of complex N-linked carbohydrate. Endoplasmic reticulum (ER) stress induces changes in glycosylation status and increases level of hypoglycosylated forms. Core carbohydrates are essential for chaperone activity. Non-secreted forms are hypoglycosylated or unglycosylated.

The protein localises to the secreted. The protein resides in the nucleus. Its subcellular location is the cytoplasm. It localises to the mitochondrion membrane. It is found in the cytosol. The protein localises to the microsome. The protein resides in the endoplasmic reticulum. Its subcellular location is the mitochondrion. It localises to the perinuclear region. It is found in the cytoplasmic vesicle. The protein localises to the secretory vesicle. The protein resides in the chromaffin granule. Functionally, functions as extracellular chaperone that prevents aggregation of non native proteins. Prevents stress-induced aggregation of blood plasma proteins. Inhibits formation of amyloid fibrils by APP, APOC2, B2M, CALCA, CSN3, SNCA and aggregation-prone LYZ variants (in vitro). Does not require ATP. Maintains partially unfolded proteins in a state appropriate for subsequent refolding by other chaperones, such as HSPA8/HSC70. Does not refold proteins by itself. Binding to cell surface receptors triggers internalization of the chaperone-client complex and subsequent lysosomal or proteasomal degradation. When secreted, protects cells against apoptosis and against cytolysis by complement: inhibits assembly of the complement membrane attack complex (MAC) by preventing polymerization of C9 pore component of the MAC complex. Intracellular forms interact with ubiquitin and SCF (SKP1-CUL1-F-box protein) E3 ubiquitin-protein ligase complexes and promote the ubiquitination and subsequent proteasomal degradation of target proteins. Promotes proteasomal degradation of COMMD1 and IKBKB. Modulates NF-kappa-B transcriptional activity. Following stress, promotes apoptosis. Inhibits apoptosis when associated with the mitochondrial membrane by interference with BAX-dependent release of cytochrome c into the cytoplasm. Plays a role in the regulation of cell proliferation. An intracellular form suppresses stress-induced apoptosis by stabilizing mitochondrial membrane integrity through interaction with HSPA5. Secreted form does not affect caspase or BAX-mediated intrinsic apoptosis and TNF-induced NF-kappa-B-activity. Secreted form act as an important modulator during neuronal differentiation through interaction with STMN3. Plays a role in the clearance of immune complexes that arise during cell injury. The polypeptide is Clusterin (CLU) (Canis lupus familiaris (Dog)).